Reading from the N-terminus, the 110-residue chain is UPF0060 membrane protein Pfl01_4105 (110 aa).

4 helical membrane-spanning segments follow: residues 5–25, 28–48, 59–79, and 84–104; these read LWFF…WMWL, GKSA…ALLL, AYAA…AVVE, and LGSD…ILFG.

Belongs to the UPF0060 family.

The protein resides in the cell inner membrane. This Pseudomonas fluorescens (strain Pf0-1) protein is UPF0060 membrane protein Pfl01_4105.